The following is a 253-amino-acid chain: DNA repair protein RecO (253 aa).

It belongs to the RecO family.

In terms of biological role, involved in DNA repair and RecF pathway recombination. The polypeptide is DNA repair protein RecO (Nitrobacter hamburgensis (strain DSM 10229 / NCIMB 13809 / X14)).